A 466-amino-acid polypeptide reads, in one-letter code: Chromogranin-A (466 aa).

An N-terminal signal peptide occupies residues 1 to 18; the sequence is MRSSAALALLLCAGQVFA. Cys-35 and Cys-56 form a disulfide bridge. The interval 91-443 is disordered; it reads AQQQQQQQQQ…ANRRAEDQEL (353 aa). The segment covering 92 to 111 has biased composition (low complexity); that stretch reads QQQQQQQQQQQQQQQQQQQQ. Ser-114 bears the Phosphoserine mark. Basic and acidic residues predominate over residues 131 to 155; sequence KHGDAASEAPSKDTVEKREDSDKGQ. A compositionally biased stretch (polar residues) spans 177 to 213; it reads ESSMMGNSQSPGEDTANNTQSPTSLPSQEHGIPQTTE. Position 215 is a phosphoserine (Ser-215). Acidic residues predominate over residues 233–247; the sequence is KEEEEEEKEEEEEEK. Positions 248–259 are enriched in basic and acidic residues; the sequence is EEKAIAREKAGP. Phosphoserine is present on residues Ser-288 and Ser-312. The span at 305 to 314 shows a compositional bias: basic and acidic residues; it reads GKGELEHSQQ. At Gly-332 the chain carries Glycine amide. Basic and acidic residues predominate over residues 351–378; it reads RLSREWEDKRWSRMDQLAKELTAEKRLE. Residues Ser-353 and Ser-386 each carry the phosphoserine modification. Position 387 is a methionine sulfoxide (Met-387). Basic and acidic residues predominate over residues 412 to 440; the sequence is SSREDSVEARGDFEEKKEEEGSANRRAED. 3 positions are modified to phosphoserine: Ser-413, Ser-417, and Ser-433. O-linked (Xyl...) (chondroitin sulfate) serine glycosylation occurs at Ser-433. The residue at position 441 (Gln-441) is a Pyrrolidone carboxylic acid. Phosphoserine is present on Ser-447.

It belongs to the chromogranin/secretogranin protein family. As to quaternary structure, self-interacts; self-assembly is promoted in vitro by chondroitin sulfate attachment which occurs at mildly acidic pH conditions. Interacts with SCG3; this interaction is optimal in conditions mimicking the lumenal milieu of the trans-Golgi network, i.e. pH 5.5 and 10 mM Ca(+2). Interacts with ITPR1 in the secretory granules. Post-translationally, O-glycosylated; contains chondroitin sulfate (CS). CS attachment is pH-dependent, being observed at mildly acidic conditions of pH 5 but not at neutral pH, and promotes self-assembly in vitro. As to expression, expressed in the brain and adrenal and pituitary glands.

Its subcellular location is the cytoplasmic vesicle. It is found in the secretory vesicle. The protein localises to the neuronal dense core vesicle. It localises to the secreted. Functionally, strongly inhibits glucose induced insulin release from the pancreas. Catestatin inhibits catecholamine release from chromaffin cells and noradrenergic neurons by acting as a non-competitive nicotinic cholinergic antagonist. Can induce mast cell migration, degranulation and production of cytokines and chemokines. Its function is as follows. Serpinin regulates granule biogenesis in endocrine cells by up-regulating the transcription of protease nexin 1 (SERPINE2) via a cAMP-PKA-SP1 pathway. This leads to inhibition of granule protein degradation in the Golgi complex which in turn promotes granule formation. Serpinin and pGlu-serpinin can enhance both myocardial contractility (inotropy) and relaxation (lusitropy) and this cardio-stimulation requires a beta 1-adrenergic receptor/adenylate cyclase/cAMP/PKA pathway. This Rattus norvegicus (Rat) protein is Chromogranin-A (Chga).